Consider the following 152-residue polypeptide: Protein-export protein SecB (152 aa).

Belongs to the SecB family. In terms of assembly, homotetramer, a dimer of dimers. One homotetramer interacts with 1 SecA dimer.

The protein localises to the cytoplasm. In terms of biological role, one of the proteins required for the normal export of preproteins out of the cell cytoplasm. It is a molecular chaperone that binds to a subset of precursor proteins, maintaining them in a translocation-competent state. It also specifically binds to its receptor SecA. The sequence is that of Protein-export protein SecB from Rickettsia typhi (strain ATCC VR-144 / Wilmington).